The primary structure comprises 334 residues: Adenosine deaminase (334 aa).

Zn(2+) is bound by residues histidine 12 and histidine 14. 3 residues coordinate substrate: histidine 14, aspartate 16, and glycine 170. Histidine 197 contributes to the Zn(2+) binding site. The active-site Proton donor is glutamate 200. Aspartate 278 serves as a coordination point for Zn(2+). Aspartate 279 serves as a coordination point for substrate.

This sequence belongs to the metallo-dependent hydrolases superfamily. Adenosine and AMP deaminases family. Adenosine deaminase subfamily. The cofactor is Zn(2+).

It catalyses the reaction adenosine + H2O + H(+) = inosine + NH4(+). It carries out the reaction 2'-deoxyadenosine + H2O + H(+) = 2'-deoxyinosine + NH4(+). Catalyzes the hydrolytic deamination of adenosine and 2-deoxyadenosine. This chain is Adenosine deaminase, found in Yersinia pseudotuberculosis serotype IB (strain PB1/+).